A 506-amino-acid chain; its full sequence is Lysine--tRNA ligase (506 aa).

Residues glutamate 416 and glutamate 423 each contribute to the Mg(2+) site.

It belongs to the class-II aminoacyl-tRNA synthetase family. As to quaternary structure, homodimer. Requires Mg(2+) as cofactor.

It is found in the cytoplasm. It catalyses the reaction tRNA(Lys) + L-lysine + ATP = L-lysyl-tRNA(Lys) + AMP + diphosphate. This is Lysine--tRNA ligase (lysS) from Xylella fastidiosa (strain 9a5c).